Reading from the N-terminus, the 304-residue chain is WW domain-binding protein 1 (304 aa).

The disordered stretch occupies residues 1–26 (MARASSRNSSEEAWGSLQAPQQQQSP). 2 consecutive short sequence motifs (PPxY motif) follow at residues 159–162 (PPAY) and 172–176 (PPPPY). Disordered stretches follow at residues 206–235 (TNVE…VHIP) and 252–304 (CPCP…GDIP). The segment covering 209-218 (EGVSSQQSAL) has biased composition (polar residues).

In terms of assembly, binds to the WW domain of YAP1, WWP1 and WWP2. Interacts with WWOX. Interacts with NEDD4.

The protein is WW domain-binding protein 1 (Wbp1) of Mus musculus (Mouse).